Reading from the N-terminus, the 388-residue chain is Probable acetyl-CoA acetyltransferase (388 aa).

Cysteine 84 functions as the Acyl-thioester intermediate in the catalytic mechanism. Residue lysine 187 forms an Isoglutamyl lysine isopeptide (Lys-Gln) (interchain with Q-Cter in protein Pup) linkage. Residues histidine 345 and cysteine 375 each act as proton acceptor in the active site.

It belongs to the thiolase-like superfamily. Thiolase family.

The enzyme catalyses 2 acetyl-CoA = acetoacetyl-CoA + CoA. This is Probable acetyl-CoA acetyltransferase from Mycolicibacterium smegmatis (strain ATCC 700084 / mc(2)155) (Mycobacterium smegmatis).